Here is a 195-residue protein sequence, read N- to C-terminus: 7-methyl-GTP pyrophosphatase (195 aa).

The active-site Proton acceptor is aspartate 71.

Belongs to the Maf family. YceF subfamily. The cofactor is a divalent metal cation.

It localises to the cytoplasm. It carries out the reaction N(7)-methyl-GTP + H2O = N(7)-methyl-GMP + diphosphate + H(+). Functionally, nucleoside triphosphate pyrophosphatase that hydrolyzes 7-methyl-GTP (m(7)GTP). May have a dual role in cell division arrest and in preventing the incorporation of modified nucleotides into cellular nucleic acids. This chain is 7-methyl-GTP pyrophosphatase, found in Shewanella oneidensis (strain ATCC 700550 / JCM 31522 / CIP 106686 / LMG 19005 / NCIMB 14063 / MR-1).